The sequence spans 201 residues: Prostamide/prostaglandin F synthase (201 aa).

Belongs to the peroxiredoxin-like PRXL2 family. Prostamide/prostaglandin F synthase subfamily.

The protein resides in the cytoplasm. It localises to the cytosol. The catalysed reaction is prostaglandin H2 + [thioredoxin]-dithiol = prostaglandin F2alpha + [thioredoxin]-disulfide. It catalyses the reaction prostamide F2alpha + [thioredoxin]-disulfide = prostamide H2 + [thioredoxin]-dithiol. Its function is as follows. Catalyzes the reduction of prostaglandin-ethanolamide H(2) (prostamide H(2)) to prostamide F(2alpha) with NADPH as proton donor. Also able to reduce prostaglandin H(2) to prostaglandin F(2alpha). The sequence is that of Prostamide/prostaglandin F synthase (prxl2b) from Xenopus laevis (African clawed frog).